We begin with the raw amino-acid sequence, 367 residues long: Phospho-N-acetylmuramoyl-pentapeptide-transferase (367 aa).

10 helical membrane-spanning segments follow: residues 16–36, 62–82, 87–107, 125–145, 158–178, 190–210, 214–234, 240–260, 264–284, and 326–346; these read LLLA…WVHF, TMGG…FNLV, MLLP…DDWL, FWIM…PQPY, VGEV…IVFI, SLAG…TFLA, LTNL…FLWY, QVFM…VVAL, QWIL…STLI, and FVLI…IFGS.

It belongs to the glycosyltransferase 4 family. MraY subfamily. It depends on Mg(2+) as a cofactor.

The protein resides in the cell membrane. The enzyme catalyses UDP-N-acetyl-alpha-D-muramoyl-L-alanyl-gamma-D-glutamyl-meso-2,6-diaminopimeloyl-D-alanyl-D-alanine + di-trans,octa-cis-undecaprenyl phosphate = di-trans,octa-cis-undecaprenyl diphospho-N-acetyl-alpha-D-muramoyl-L-alanyl-D-glutamyl-meso-2,6-diaminopimeloyl-D-alanyl-D-alanine + UMP. The protein operates within cell wall biogenesis; peptidoglycan biosynthesis. Catalyzes the initial step of the lipid cycle reactions in the biosynthesis of the cell wall peptidoglycan: transfers peptidoglycan precursor phospho-MurNAc-pentapeptide from UDP-MurNAc-pentapeptide onto the lipid carrier undecaprenyl phosphate, yielding undecaprenyl-pyrophosphoryl-MurNAc-pentapeptide, known as lipid I. The chain is Phospho-N-acetylmuramoyl-pentapeptide-transferase from Chloroflexus aggregans (strain MD-66 / DSM 9485).